Reading from the N-terminus, the 316-residue chain is Small ribosomal subunit protein RACK1 (316 aa).

WD repeat units follow at residues 13–44 (GHNG…IIWN), 61–91 (GHSH…RLWE), 103–133 (GHTN…KLWN), 146–178 (GHTE…KVWE), 190–220 (GHTG…MLWD), 231–260 (NAND…IIFD), and 281–311 (SREP…RAWG).

This sequence belongs to the WD repeat G protein beta family. Ribosomal protein RACK1 subfamily. In terms of assembly, component of the small ribosomal subunit (SSU). Mature N.crassa ribosomes consist of a small (40S) and a large (60S) subunit. The 40S small subunit contains 1 molecule of ribosomal RNA (18S rRNA) and at least 32 different proteins. The large 60S subunit contains 3 rRNA molecules (26S, 5.8S and 5S rRNA) and at least 42 different proteins.

The protein resides in the cytoplasm. Functionally, component of the ribosome, a large ribonucleoprotein complex responsible for the synthesis of proteins in the cell. The small ribosomal subunit (SSU) binds messenger RNAs (mRNAs) and translates the encoded message by selecting cognate aminoacyl-transfer RNA (tRNA) molecules. The large subunit (LSU) contains the ribosomal catalytic site termed the peptidyl transferase center (PTC), which catalyzes the formation of peptide bonds, thereby polymerizing the amino acids delivered by tRNAs into a polypeptide chain. The nascent polypeptides leave the ribosome through a tunnel in the LSU and interact with protein factors that function in enzymatic processing, targeting, and the membrane insertion of nascent chains at the exit of the ribosomal tunnel. Required to activate general amino acid control under conditions of amino acid limitation in the vegetative growth phase, and for formation of protoperithecia in preparation for the sexual phase of the life cycle of N.crassa. In Neurospora crassa (strain ATCC 24698 / 74-OR23-1A / CBS 708.71 / DSM 1257 / FGSC 987), this protein is Small ribosomal subunit protein RACK1 (cpc-2).